Reading from the N-terminus, the 131-residue chain is Profilin-2 (131 aa).

Cysteines 13 and 115 form a disulfide. The Involved in PIP2 interaction motif lies at 81–97 (AVIRGKKGPGGVTVKKT). T111 bears the Phosphothreonine mark.

It belongs to the profilin family. In terms of assembly, multimer. Occurs in many kinds of cells as a complex with monomeric actin in a 1:1 ratio. Phosphorylated by MAP kinases.

It localises to the cytoplasm. It is found in the cytoskeleton. Its function is as follows. Binds to actin and affects the structure of the cytoskeleton. At high concentrations, profilin prevents the polymerization of actin, whereas it enhances it at low concentrations. By binding to PIP2, it inhibits the formation of IP3 and DG. The chain is Profilin-2 from Hevea brasiliensis (Para rubber tree).